A 361-amino-acid chain; its full sequence is Salt tolerance receptor-like cytoplasmic kinase 1 (361 aa).

S-palmitoyl cysteine attachment occurs at residues cysteine 5, cysteine 10, and cysteine 14. Positions 67–347 (GFSSRVIGHG…RALQEKTSAL (281 aa)) constitute a Protein kinase domain. Residues 73–81 (IGHGGFSTV) and lysine 95 contribute to the ATP site. Catalysis depends on aspartate 195, which acts as the Proton acceptor.

This sequence belongs to the protein kinase superfamily. Ser/Thr protein kinase family. In terms of assembly, self-interacts. Interacts with CATA, CATB and CATC at the plasma membrane. In terms of processing, palmitoylated. Palmotylation at Cys-5, Cys-10 and Cys-14 by DHHC9 is required for plasma membrane targeting and STRK1 function. Post-translationally, autophosphorylated. Accumulates in seeds. Mainly expressed in young roots, and, to a lower extent, in leaf veins, seedlings, stems, leaf sheath and young spikelet.

It localises to the cell membrane. The catalysed reaction is L-seryl-[protein] + ATP = O-phospho-L-seryl-[protein] + ADP + H(+). It carries out the reaction L-threonyl-[protein] + ATP = O-phospho-L-threonyl-[protein] + ADP + H(+). The enzyme catalyses L-tyrosyl-[protein] + ATP = O-phospho-L-tyrosyl-[protein] + ADP + H(+). Acts probably as a dual specificity protein kinase. Regulates hydrogen peroxide (H(2)O(2)) homeostasis and improves salt tolerance by phosphorylating tyrosine residues of CATC thus activating its catalase activity. Promotes growth at the seedling stage and prevents grain yield loss under salt stress conditions. This is Salt tolerance receptor-like cytoplasmic kinase 1 from Oryza sativa subsp. japonica (Rice).